A 482-amino-acid chain; its full sequence is Solute carrier family 49 member A3 (482 aa).

Helical transmembrane passes span 41–61 (WFVLGVICLLSCTNAMLWISF), 81–101 (YLSLVYLIIAIPVGFGASWLI), 109–129 (AIVFSSWLNMIGSIIRCGAIV), 150–170 (LCAIAQPLVLFVPAKLASVWF), 181–201 (IASMSNPLGVLLANIISPSVV), 206–226 (YIAHMLGIYTVPAIAACILAT), 264–284 (VILMLCFGAGIGIFTAISSFL), 296–316 (LFAGVCGALFIFFGFIGAFVC), 330–350 (VKTCFALTALTSIAFALVINF), 355–375 (VLVACVCSLLGLFGFAISPVG), 390–410 (SSTGLAFISGQIQGIIYMILF), and 437–457 (TSMLVMAALCSFGSCIFIIFF).

This sequence belongs to the major facilitator superfamily.

Its subcellular location is the membrane. This is Solute carrier family 49 member A3 (slc49a3) from Xenopus tropicalis (Western clawed frog).